An 89-amino-acid chain; its full sequence is Small ribosomal subunit protein uS15 (89 aa).

The protein belongs to the universal ribosomal protein uS15 family. In terms of assembly, part of the 30S ribosomal subunit. Forms a bridge to the 50S subunit in the 70S ribosome, contacting the 23S rRNA.

One of the primary rRNA binding proteins, it binds directly to 16S rRNA where it helps nucleate assembly of the platform of the 30S subunit by binding and bridging several RNA helices of the 16S rRNA. Its function is as follows. Forms an intersubunit bridge (bridge B4) with the 23S rRNA of the 50S subunit in the ribosome. This is Small ribosomal subunit protein uS15 from Exiguobacterium sp. (strain ATCC BAA-1283 / AT1b).